The following is a 353-amino-acid chain: MTIALGRFTKDENDLFDIMDDWLRRDRFVFVGWSGLLLFPCAYFALGGWFTGTTFVTSWYTHGLASSYLEGCNFLTAAVSTPANSLAHSLLLLWGPEAQGDFTRWCQLGGLWTFVALHGAFGLIGFMLRQFELARSVQLRPYNAIAFSAPIAVFVSVFLIYPLGQSGWFFAPSFGVAAIFRFILFFQGFHNWTLNPFHMMGVAGVLGAALLCAIHGATVENTLFEDGDGANTFRAFNPTQAEETYSMVTANRFWSQIFGVAFSNKRWLHFFMLFVPVTGLWMSALGVVGLALNLRAYDFVSQEIRAAEDPEFETFYTKNILLNEGIRAWMAAQDQPHENLIFPEEVLPRGNAL.

T2 carries the post-translational modification N-acetylthreonine. At T2 the chain carries Phosphothreonine. Residues 41 to 61 (CAYFALGGWFTGTTFVTSWYT) traverse the membrane as a helical segment. Position 118 (H118) interacts with chlorophyll a. The helical transmembrane segment at 125–141 (GFMLRQFELARSVQLRP) threads the bilayer. Positions 130 and 143 each coordinate pheophytin a. The chain crosses the membrane as a helical span at residues 153–166 (VFVSVFLIYPLGQS). H198 provides a ligand contact to chlorophyll a. Residues 208–228 (AALLCAIHGATVENTLFEDGD) form a helical membrane-spanning segment. Positions 215 and 262 each coordinate a plastoquinone. H215 lines the Fe cation pocket. H269 contributes to the Fe cation binding site. The helical transmembrane segment at 279–295 (GLWMSALGVVGLALNLR) threads the bilayer.

The protein belongs to the reaction center PufL/M/PsbA/D family. As to quaternary structure, PSII is composed of 1 copy each of membrane proteins PsbA, PsbB, PsbC, PsbD, PsbE, PsbF, PsbH, PsbI, PsbJ, PsbK, PsbL, PsbM, PsbT, PsbX, PsbY, PsbZ, Psb30/Ycf12, at least 3 peripheral proteins of the oxygen-evolving complex and a large number of cofactors. It forms dimeric complexes. The D1/D2 heterodimer binds P680, chlorophylls that are the primary electron donor of PSII, and subsequent electron acceptors. It shares a non-heme iron and each subunit binds pheophytin, quinone, additional chlorophylls, carotenoids and lipids. There is also a Cl(-1) ion associated with D1 and D2, which is required for oxygen evolution. The PSII complex binds additional chlorophylls, carotenoids and specific lipids. is required as a cofactor.

Its subcellular location is the plastid. The protein resides in the chloroplast thylakoid membrane. The enzyme catalyses 2 a plastoquinone + 4 hnu + 2 H2O = 2 a plastoquinol + O2. Its function is as follows. Photosystem II (PSII) is a light-driven water:plastoquinone oxidoreductase that uses light energy to abstract electrons from H(2)O, generating O(2) and a proton gradient subsequently used for ATP formation. It consists of a core antenna complex that captures photons, and an electron transfer chain that converts photonic excitation into a charge separation. The D1/D2 (PsbA/PsbD) reaction center heterodimer binds P680, the primary electron donor of PSII as well as several subsequent electron acceptors. D2 is needed for assembly of a stable PSII complex. The polypeptide is Photosystem II D2 protein (Platanus occidentalis (Sycamore)).